Here is a 139-residue protein sequence, read N- to C-terminus: 6,7-dimethyl-8-ribityllumazine synthase (139 aa).

5-amino-6-(D-ribitylamino)uracil-binding positions include phenylalanine 11, 42–44, and 66–68; these read ALE and VVI. 71–72 is a binding site for (2S)-2-hydroxy-3-oxobutyl phosphate; the sequence is ET. Histidine 74 (proton donor) is an active-site residue. 5-amino-6-(D-ribitylamino)uracil is bound at residue asparagine 98. Arginine 112 serves as a coordination point for (2S)-2-hydroxy-3-oxobutyl phosphate.

This sequence belongs to the DMRL synthase family.

The catalysed reaction is (2S)-2-hydroxy-3-oxobutyl phosphate + 5-amino-6-(D-ribitylamino)uracil = 6,7-dimethyl-8-(1-D-ribityl)lumazine + phosphate + 2 H2O + H(+). Its pathway is cofactor biosynthesis; riboflavin biosynthesis; riboflavin from 2-hydroxy-3-oxobutyl phosphate and 5-amino-6-(D-ribitylamino)uracil: step 1/2. Its function is as follows. Catalyzes the formation of 6,7-dimethyl-8-ribityllumazine by condensation of 5-amino-6-(D-ribitylamino)uracil with 3,4-dihydroxy-2-butanone 4-phosphate. This is the penultimate step in the biosynthesis of riboflavin. The polypeptide is 6,7-dimethyl-8-ribityllumazine synthase (Novosphingobium aromaticivorans (strain ATCC 700278 / DSM 12444 / CCUG 56034 / CIP 105152 / NBRC 16084 / F199)).